The primary structure comprises 125 residues: Probable 4-amino-4-deoxy-L-arabinose-phosphoundecaprenol flippase subunit ArnF (125 aa).

At M1–G2 the chain is on the cytoplasmic side. A helical membrane pass occupies residues V3–A23. The Periplasmic segment spans residues M24–P33. Residues L34–L54 traverse the membrane as a helical segment. Over A55 to A76 the chain is Cytoplasmic. Residues Y77–L97 form a helical membrane-spanning segment. Residues Q98–A100 are Periplasmic-facing. The helical transmembrane segment at F101–L121 threads the bilayer. Residues P122 to S125 are Cytoplasmic-facing.

It belongs to the ArnF family. Heterodimer of ArnE and ArnF.

It is found in the cell inner membrane. It participates in bacterial outer membrane biogenesis; lipopolysaccharide biosynthesis. Functionally, translocates 4-amino-4-deoxy-L-arabinose-phosphoundecaprenol (alpha-L-Ara4N-phosphoundecaprenol) from the cytoplasmic to the periplasmic side of the inner membrane. This Salmonella paratyphi A (strain ATCC 9150 / SARB42) protein is Probable 4-amino-4-deoxy-L-arabinose-phosphoundecaprenol flippase subunit ArnF.